We begin with the raw amino-acid sequence, 295 residues long: Tyrosine recombinase XerC (295 aa).

A Core-binding (CB) domain is found at 1 to 85 (MLTALNRYWD…ALRRFLSFLV (85 aa)). The region spanning 106 to 285 (HLPKNMDGEQ…NFQHLAEVYD (180 aa)) is the Tyr recombinase domain. Active-site residues include Arg145, Lys169, His237, Arg240, and His263. Catalysis depends on Tyr272, which acts as the O-(3'-phospho-DNA)-tyrosine intermediate.

The protein belongs to the 'phage' integrase family. XerC subfamily. Forms a cyclic heterotetrameric complex composed of two molecules of XerC and two molecules of XerD.

The protein localises to the cytoplasm. Functionally, site-specific tyrosine recombinase, which acts by catalyzing the cutting and rejoining of the recombining DNA molecules. The XerC-XerD complex is essential to convert dimers of the bacterial chromosome into monomers to permit their segregation at cell division. It also contributes to the segregational stability of plasmids. The sequence is that of Tyrosine recombinase XerC from Haemophilus influenzae (strain 86-028NP).